The primary structure comprises 237 residues: Zinc finger AN1 domain-containing stress-associated protein 14 (237 aa).

Residues 1 to 31 (MATKRKCPANGDDGGVADLEPVAGGSFASPP) are disordered. Residues 171 to 217 (QPEANRCATCRRKVGLTGFKCRCGGTFCGGHRYADEHGCGFDYKSSG) form an AN1-type zinc finger. Positions 177, 180, 191, 193, 198, 201, 207, and 209 each coordinate Zn(2+).

Functionally, may be involved in environmental stress response. This chain is Zinc finger AN1 domain-containing stress-associated protein 14 (SAP14), found in Oryza sativa subsp. japonica (Rice).